The chain runs to 701 residues: 1,4-alpha-glucan branching enzyme GlgB (701 aa).

The Nucleophile role is filled by aspartate 381. Residue glutamate 434 is the Proton donor of the active site.

This sequence belongs to the glycosyl hydrolase 13 family. GlgB subfamily. As to quaternary structure, monomer.

The enzyme catalyses Transfers a segment of a (1-&gt;4)-alpha-D-glucan chain to a primary hydroxy group in a similar glucan chain.. Its pathway is glycan biosynthesis; glycogen biosynthesis. Functionally, catalyzes the formation of the alpha-1,6-glucosidic linkages in glycogen by scission of a 1,4-alpha-linked oligosaccharide from growing alpha-1,4-glucan chains and the subsequent attachment of the oligosaccharide to the alpha-1,6 position. In Jannaschia sp. (strain CCS1), this protein is 1,4-alpha-glucan branching enzyme GlgB.